The sequence spans 297 residues: Inosose dehydratase (297 aa).

It belongs to the IolE/MocC family. It depends on glutathione as a cofactor. Co(2+) serves as cofactor. The cofactor is Mn(2+).

It catalyses the reaction scyllo-inosose = 3D-3,5/4-trihydroxycyclohexane-1,2-dione + H2O. It functions in the pathway polyol metabolism; myo-inositol degradation into acetyl-CoA; acetyl-CoA from myo-inositol: step 2/7. Functionally, catalyzes the dehydration of inosose (2-keto-myo-inositol, 2KMI or 2,4,6/3,5-pentahydroxycyclohexanone) to 3D-(3,5/4)-trihydroxycyclohexane-1,2-dione (D-2,3-diketo-4-deoxy-epi-inositol). This Clostridium perfringens (strain ATCC 13124 / DSM 756 / JCM 1290 / NCIMB 6125 / NCTC 8237 / Type A) protein is Inosose dehydratase.